Here is a 1342-residue protein sequence, read N- to C-terminus: DNA-directed RNA polymerase subunit beta (1342 aa).

Belongs to the RNA polymerase beta chain family. The RNAP catalytic core consists of 2 alpha, 1 beta, 1 beta' and 1 omega subunit. When a sigma factor is associated with the core the holoenzyme is formed, which can initiate transcription.

The catalysed reaction is RNA(n) + a ribonucleoside 5'-triphosphate = RNA(n+1) + diphosphate. DNA-dependent RNA polymerase catalyzes the transcription of DNA into RNA using the four ribonucleoside triphosphates as substrates. This chain is DNA-directed RNA polymerase subunit beta, found in Sodalis glossinidius (strain morsitans).